Reading from the N-terminus, the 295-residue chain is 15-cis-phytoene synthase (295 aa).

This sequence belongs to the phytoene/squalene synthase family. ATP serves as cofactor. It depends on Mn(2+) as a cofactor.

It carries out the reaction 2 (2E,6E,10E)-geranylgeranyl diphosphate = 15-cis-phytoene + 2 diphosphate. It participates in carotenoid biosynthesis; phytoene biosynthesis. Its activity is regulated as follows. Significant inhibition is seen at GGPP concentrations above 100 uM. Its function is as follows. Involved in the biosynthesis of carotenoids. Catalyzes stereoselectively the condensation of two molecules of geranylgeranyl diphosphate (GGPP) to give prephytoene diphosphate (PPPP) and the subsequent rearrangement of the cyclopropylcarbinyl intermediate to yield 15-cis-phytoene. This chain is 15-cis-phytoene synthase (crtB), found in Enterobacter agglomerans (Erwinia herbicola).